A 363-amino-acid chain; its full sequence is Type-2 angiotensin II receptor (363 aa).

The Extracellular segment spans residues 1–45; it reads MKGNSTLATTSKNITSGLHFGLVNISGNNESTLNCSQKPSDKHLD. N-linked (GlcNAc...) asparagine glycans are attached at residues Asn4, Asn13, Asn24, Asn29, and Asn34. Intrachain disulfides connect Cys35–Cys290 and Cys117–Cys195. Residues 46-70 form a helical membrane-spanning segment; the sequence is AIPILYYIIFVIGFLVNIVVVTLFC. The Cytoplasmic portion of the chain corresponds to 71-80; sequence CQKGPKKVSS. Residues 81-104 form a helical membrane-spanning segment; it reads IYIFNLAVADLLLLATLPLWATYY. 2 residues coordinate angiotensin II: Tyr103 and Tyr104. At 105-114 the chain is on the extracellular side; the sequence is SYRYDWLFGP. The chain crosses the membrane as a helical span at residues 115–140; it reads VMCKVFGSFLTLNMFASIFFITCMSV. At 141-159 the chain is on the cytoplasmic side; sequence DRYQSVIYPFLSQRRNPWQ. Residues 160–181 form a helical membrane-spanning segment; it reads ASYIVPLVWCMACLSSLPTFYF. The angiotensin II site is built by Arg182, Tyr204, and Lys215. The Extracellular segment spans residues 182–206; the sequence is RDVRTIEYLGVNACIMAFPPEKYAQ. Residues 207–232 form a helical membrane-spanning segment; that stretch reads WSAGIALMKNILGFIIPLIFIATCYF. The Cytoplasmic portion of the chain corresponds to 233-257; the sequence is GIRKHLLKTNSYGKNRITRDQVLKM. Residues 258 to 281 form a helical membrane-spanning segment; it reads AAAVVLAFIICWLPFHVLTFLDAL. Asp279 contributes to the angiotensin II binding site. Residues 282 to 294 lie on the Extracellular side of the membrane; the sequence is AWMGVINSCEVIA. Residues 295-320 form a helical membrane-spanning segment; it reads VIDLALPFAILLGFTNSCVNPFLYCF. Asp297 lines the angiotensin II pocket. Topologically, residues 321–363 are cytoplasmic; that stretch reads VGNRFQQKLRSVFRVPITWLQGKRESMSCRKSSSLREMETFVS. The helix VIII stretch occupies residues 324–333; sequence RFQQKLRSVF.

It belongs to the G-protein coupled receptor 1 family. As to quaternary structure, interacts with MTUS1. In adult, highly expressed in myometrium with lower levels in adrenal gland and fallopian tube. Expressed in the cerebellum. Very highly expressed in fetal kidney and intestine.

It is found in the cell membrane. In terms of biological role, receptor for angiotensin II, a vasoconstricting peptide. Signals primarily via a non-canonical G-protein- and beta-arrestin independent pathways. Cooperates with MTUS1 to inhibit ERK2 activation and cell proliferation. This is Type-2 angiotensin II receptor from Homo sapiens (Human).